Consider the following 248-residue polypeptide: UDP-2,3-diacylglucosamine hydrolase (248 aa).

Mn(2+) contacts are provided by D8, H10, D41, N79, and H114. 79 to 80 (NR) contacts substrate. D122, S160, D171, and H202 together coordinate substrate. Mn(2+) is bound by residues H202 and H204.

Belongs to the LpxH family. Mn(2+) is required as a cofactor.

The protein localises to the cell inner membrane. It catalyses the reaction UDP-2-N,3-O-bis[(3R)-3-hydroxytetradecanoyl]-alpha-D-glucosamine + H2O = 2-N,3-O-bis[(3R)-3-hydroxytetradecanoyl]-alpha-D-glucosaminyl 1-phosphate + UMP + 2 H(+). It participates in glycolipid biosynthesis; lipid IV(A) biosynthesis; lipid IV(A) from (3R)-3-hydroxytetradecanoyl-[acyl-carrier-protein] and UDP-N-acetyl-alpha-D-glucosamine: step 4/6. Functionally, hydrolyzes the pyrophosphate bond of UDP-2,3-diacylglucosamine to yield 2,3-diacylglucosamine 1-phosphate (lipid X) and UMP by catalyzing the attack of water at the alpha-P atom. Involved in the biosynthesis of lipid A, a phosphorylated glycolipid that anchors the lipopolysaccharide to the outer membrane of the cell. In Stenotrophomonas maltophilia (strain R551-3), this protein is UDP-2,3-diacylglucosamine hydrolase.